A 159-amino-acid polypeptide reads, in one-letter code: Cyclic pyranopterin monophosphate synthase (159 aa).

Residues 75 to 77 (LCH) and 113 to 114 (ME) each bind substrate. The active site involves Asp128.

This sequence belongs to the MoaC family. As to quaternary structure, homohexamer; trimer of dimers.

The catalysed reaction is (8S)-3',8-cyclo-7,8-dihydroguanosine 5'-triphosphate = cyclic pyranopterin phosphate + diphosphate. The protein operates within cofactor biosynthesis; molybdopterin biosynthesis. Its function is as follows. Catalyzes the conversion of (8S)-3',8-cyclo-7,8-dihydroguanosine 5'-triphosphate to cyclic pyranopterin monophosphate (cPMP). This Burkholderia multivorans (strain ATCC 17616 / 249) protein is Cyclic pyranopterin monophosphate synthase.